The primary structure comprises 151 residues: Transcription elongation factor Spt5 (151 aa).

One can recognise a KOW domain in the interval Pro98 to Val128.

Belongs to the archaeal Spt5 family. As to quaternary structure, heterodimer composed of Spt4 and Spt5. Interacts with RNA polymerase (RNAP).

Stimulates transcription elongation. This is Transcription elongation factor Spt5 from Aeropyrum pernix (strain ATCC 700893 / DSM 11879 / JCM 9820 / NBRC 100138 / K1).